The following is a 109-amino-acid chain: Ribulose bisphosphate carboxylase small subunit (109 aa).

The protein belongs to the RuBisCO small chain family. As to quaternary structure, heterohexadecamer of 8 large and 8 small subunits.

The protein resides in the carboxysome. In terms of biological role, ruBisCO catalyzes two reactions: the carboxylation of D-ribulose 1,5-bisphosphate, the primary event in carbon dioxide fixation, as well as the oxidative fragmentation of the pentose substrate in the photorespiration process. Both reactions occur simultaneously and in competition at the same active site. Although the small subunit is not catalytic it is essential for maximal activity. The polypeptide is Ribulose bisphosphate carboxylase small subunit (Prochlorothrix hollandica).